Consider the following 356-residue polypeptide: Chorismate synthase (356 aa).

Positions 48 and 54 each coordinate NADP(+). FMN contacts are provided by residues 125 to 127, 237 to 238, Gly282, 297 to 301, and Arg323; these read RSS, NA, and KPTSS.

It belongs to the chorismate synthase family. As to quaternary structure, homotetramer. FMNH2 is required as a cofactor.

It catalyses the reaction 5-O-(1-carboxyvinyl)-3-phosphoshikimate = chorismate + phosphate. It participates in metabolic intermediate biosynthesis; chorismate biosynthesis; chorismate from D-erythrose 4-phosphate and phosphoenolpyruvate: step 7/7. Its function is as follows. Catalyzes the anti-1,4-elimination of the C-3 phosphate and the C-6 proR hydrogen from 5-enolpyruvylshikimate-3-phosphate (EPSP) to yield chorismate, which is the branch point compound that serves as the starting substrate for the three terminal pathways of aromatic amino acid biosynthesis. This reaction introduces a second double bond into the aromatic ring system. The protein is Chorismate synthase of Rhizorhabdus wittichii (strain DSM 6014 / CCUG 31198 / JCM 15750 / NBRC 105917 / EY 4224 / RW1) (Sphingomonas wittichii).